Consider the following 634-residue polypeptide: MTNSNLRTENHFDYVKITLASPERVMEWGQRTLPNGQVVGEVTKPETINYRTLKPEMDGLFCEKIFGPSKDWECHCGKYKRVRHRGIVCERCGVEVTESRVRRHRMGFIKLAAPVSHVWYLKGIPSYVAILLDMPLRDVEQIVYFNCYVVLDPGDHKELKYKQLLTEDEWLEIEDEIYAEESEIENEPVVGIGAEALKQLLEDLNLEEVAEQLREEINGSKGQKRAKLIKRLRVIDNFVATSARPEWMVLDVIPVIPPDLRPMVQLDGGRFATSDLNDLYRRVINRNNRLARLQEILAPEIIVRNEKRMLQEAVDALIDNGRRGRTVVGANNRPLKSLSDIIEGKQGRFRQNLLGKRVDYSGRSVIVVGPKLKMHQCGLPKEMAIELFQPFVIHRLIRQNIVNNIKAAKKLIQRADDEVMQVLQEVIDGHPIMLNRAPTLHRLGIQAFEPKLVDGRAIQLHPLVCPAFNADFDGDQMAVHVPLAIEAQTEARMLMLASNNILSPATGEPIVTPSQDMVLGSYYLTALQPGAEQPEFGDRSRTYSSLEDVIHAFEDTRIGLHDWVWVRFNGEVEDNDELDEPIKSETLSDGTRIEQWTYRRDRFDEDGALISRYILTTTGRVVMNHTIIGAVAAA.

Zn(2+)-binding residues include Cys-74, Cys-76, Cys-89, and Cys-92. Asp-471, Asp-473, and Asp-475 together coordinate Mg(2+).

The protein belongs to the RNA polymerase beta' chain family. RpoC1 subfamily. In cyanobacteria the RNAP catalytic core is composed of 2 alpha, 1 beta, 1 beta', 1 gamma and 1 omega subunit. When a sigma factor is associated with the core the holoenzyme is formed, which can initiate transcription. Mg(2+) is required as a cofactor. Zn(2+) serves as cofactor.

The enzyme catalyses RNA(n) + a ribonucleoside 5'-triphosphate = RNA(n+1) + diphosphate. Functionally, DNA-dependent RNA polymerase catalyzes the transcription of DNA into RNA using the four ribonucleoside triphosphates as substrates. The sequence is that of DNA-directed RNA polymerase subunit gamma from Parasynechococcus marenigrum (strain WH8102).